Reading from the N-terminus, the 40-residue chain is MKVRKSLRSLKNKPGAQVVRRRGKVYVINKKEPRFKARQG.

The protein belongs to the bacterial ribosomal protein bL36 family.

In Corynebacterium jeikeium (strain K411), this protein is Large ribosomal subunit protein bL36.